A 221-amino-acid chain; its full sequence is Ribosomal RNA small subunit methyltransferase G (221 aa).

S-adenosyl-L-methionine contacts are provided by residues Gly-89, Leu-94, 140-141 (VE), and Arg-154.

This sequence belongs to the methyltransferase superfamily. RNA methyltransferase RsmG family.

It localises to the cytoplasm. The enzyme catalyses guanosine(527) in 16S rRNA + S-adenosyl-L-methionine = N(7)-methylguanosine(527) in 16S rRNA + S-adenosyl-L-homocysteine. In terms of biological role, specifically methylates the N7 position of guanine in position 527 of 16S rRNA. In Methylibium petroleiphilum (strain ATCC BAA-1232 / LMG 22953 / PM1), this protein is Ribosomal RNA small subunit methyltransferase G.